The sequence spans 302 residues: Cyclin-C (302 aa).

In terms of domain architecture, Cyclin N-terminal spans 46–152; that stretch reads NFITAVATEG…VYDSEFILVE (107 aa). The interval 281-302 is disordered; that stretch reads LPKPNQQPPPQQQHQHQQGYHL. Residues 292 to 302 are compositionally biased toward low complexity; the sequence is QQHQHQQGYHL.

This sequence belongs to the cyclin family. Cyclin C subfamily. Component of the Mediator complex.

It is found in the nucleus. Functionally, component of the Mediator complex, a coactivator involved in regulated gene transcription of nearly all RNA polymerase II-dependent genes. Mediator functions as a bridge to convey information from gene-specific regulatory proteins to the basal RNA polymerase II transcription machinery. Mediator is recruited to promoters by direct interactions with regulatory proteins and serves as a scaffold for the assembly of a functional preinitiation complex with RNA polymerase II and the general transcription factors. Binds to and activates cyclin-dependent kinase cdk-8 that phosphorylates the CTD (C-terminal domain) of the large subunit of RNA polymerase II (RNAp II), which may inhibit the formation of a transcription initiation complex. This is Cyclin-C (cic-1) from Caenorhabditis elegans.